Consider the following 356-residue polypeptide: UDP-N-acetylglucosamine--N-acetylmuramyl-(pentapeptide) pyrophosphoryl-undecaprenol N-acetylglucosamine transferase (356 aa).

Residues 13–15, asparagine 125, arginine 161, serine 189, isoleucine 243, and glutamine 288 contribute to the UDP-N-acetyl-alpha-D-glucosamine site; that span reads TGG.

Belongs to the glycosyltransferase 28 family. MurG subfamily.

The protein localises to the cell inner membrane. It catalyses the reaction di-trans,octa-cis-undecaprenyl diphospho-N-acetyl-alpha-D-muramoyl-L-alanyl-D-glutamyl-meso-2,6-diaminopimeloyl-D-alanyl-D-alanine + UDP-N-acetyl-alpha-D-glucosamine = di-trans,octa-cis-undecaprenyl diphospho-[N-acetyl-alpha-D-glucosaminyl-(1-&gt;4)]-N-acetyl-alpha-D-muramoyl-L-alanyl-D-glutamyl-meso-2,6-diaminopimeloyl-D-alanyl-D-alanine + UDP + H(+). It functions in the pathway cell wall biogenesis; peptidoglycan biosynthesis. Its function is as follows. Cell wall formation. Catalyzes the transfer of a GlcNAc subunit on undecaprenyl-pyrophosphoryl-MurNAc-pentapeptide (lipid intermediate I) to form undecaprenyl-pyrophosphoryl-MurNAc-(pentapeptide)GlcNAc (lipid intermediate II). In Cupriavidus metallidurans (strain ATCC 43123 / DSM 2839 / NBRC 102507 / CH34) (Ralstonia metallidurans), this protein is UDP-N-acetylglucosamine--N-acetylmuramyl-(pentapeptide) pyrophosphoryl-undecaprenol N-acetylglucosamine transferase.